The following is a 622-amino-acid chain: Histone-lysine N-methyltransferase set9 (622 aa).

The region spanning 120–234 is the SET domain; that stretch reads SPFEITTTNR…IGEEITVSYG (115 aa). Disordered regions lie at residues 262–314, 335–394, 427–470, and 576–622; these read VPSE…GKFV, QPAG…TTAT, PTTS…RGKP, and DRGV…RMTM. Over residues 265–285 the composition is skewed to polar residues; that stretch reads EPQSKASTPALNDDTLSTDSH. Over residues 376-394 the composition is skewed to low complexity; that stretch reads PPSTAANESERSSTSTTAT. 2 stretches are compositionally biased toward polar residues: residues 427 to 437 and 446 to 458; these read PTTSLRSGSTE and DQPSTLKQGSIGS. Residues 590-607 are compositionally biased toward basic and acidic residues; the sequence is SEPRTETEGSEGCEDRRT. A compositionally biased stretch (basic residues) spans 608-622; the sequence is TRASRRRTRSLRMTM.

This sequence belongs to the class V-like SAM-binding methyltransferase superfamily. Histone-lysine methyltransferase family. Suvar4-20 subfamily.

The protein resides in the nucleus. It localises to the chromosome. The catalysed reaction is L-lysyl(20)-[histone H4] + 3 S-adenosyl-L-methionine = N(6),N(6),N(6)-trimethyl-L-lysyl(20)-[histone H4] + 3 S-adenosyl-L-homocysteine + 3 H(+). Functionally, histone methyltransferase that trimethylates 'Lys-20' of histone H4 to form H4K20me3. The sequence is that of Histone-lysine N-methyltransferase set9 (set9) from Aspergillus fumigatus (strain ATCC MYA-4609 / CBS 101355 / FGSC A1100 / Af293) (Neosartorya fumigata).